A 425-amino-acid chain; its full sequence is MRAEIISVGTELLLGHTINTDAAHVGRALSALGMDLLQVHTVGDNAGRLEAALREALNCADVVITTGGLGPTDDDMTKETVARVLGAPLEEHKDSLRRLREYFGSRPIAANQLKQAWLPRGSTAFPNRAGTAPGCAVPGKPGQWVILLPGPPSELLPMLEDSVMPFLQRMGGAVIASFMVRTFGIGEGSAALRIADLTEGANPTVAPYASDAEMFVRVTAKAENAEAAEALAKPVVDAVRGRLGDVVYGVNVSGLEAVVVEQLRQHRRSLAIAESCTGGLLAKRITDQPGASEVFGYGLITYANEAKTRLLGVPEEQLACYGAVSPQVARSMAVGVRERYGADYGLGITGVAGPGGGTEEKPVGLVYVALSCSNAVWLRVLRPQGRYLGREWTRRLASSHALDMLRRHMAGLPVEAGWADGLPQD.

The protein belongs to the CinA family.

The protein is CinA-like protein of Desulfovibrio desulfuricans (strain ATCC 27774 / DSM 6949 / MB).